The sequence spans 317 residues: Endochitinase 3 (317 aa).

An N-terminal signal peptide occupies residues 1–19 (MFVRNALVVTGLLAALTQA). N-linked (GlcNAc...) asparagine glycans are attached at residues Asn25, Asn49, and Asn169. The region spanning 29 to 317 (HKLTVYWGAE…NYQKEIKANL (289 aa)) is the GH18 domain. Glu170 (proton donor) is an active-site residue. N-linked (GlcNAc...) asparagine glycosylation occurs at Asn245.

It belongs to the glycosyl hydrolase 18 family. Chitinase class III subfamily.

The protein localises to the secreted. It carries out the reaction Random endo-hydrolysis of N-acetyl-beta-D-glucosaminide (1-&gt;4)-beta-linkages in chitin and chitodextrins.. Its function is as follows. Secreted chitinase involved in the degradation of chitin, a component of the cell walls of fungi and exoskeletal elements of some animals (including worms and arthropods). Participates in the infection process and directly acts in the penetration process of the host cuticle. Involved in heat-shock adaptation. The protein is Endochitinase 3 (chi3) of Metarhizium robertsii (strain ARSEF 23 / ATCC MYA-3075) (Metarhizium anisopliae (strain ARSEF 23)).